Consider the following 467-residue polypeptide: Argininosuccinate lyase 1 (467 aa).

Belongs to the lyase 1 family. Argininosuccinate lyase subfamily.

The protein localises to the cytoplasm. It carries out the reaction 2-(N(omega)-L-arginino)succinate = fumarate + L-arginine. It participates in amino-acid biosynthesis; L-arginine biosynthesis; L-arginine from L-ornithine and carbamoyl phosphate: step 3/3. The protein is Argininosuccinate lyase 1 of Rhizobium meliloti (strain 1021) (Ensifer meliloti).